We begin with the raw amino-acid sequence, 34 residues long: Protamine-Z1/Z2 (34 aa).

Residues 1–34 form a disordered region; the sequence is PRRRRRSSRPVRRRRRYRRSTVARRRRRVVRRRR.

Testis.

The protein localises to the nucleus. It localises to the chromosome. Functionally, protamines substitute for histones in the chromatin of sperm during the haploid phase of spermatogenesis. They compact sperm DNA into a highly condensed, stable and inactive complex. The chain is Protamine-Z1/Z2 from Thunnus thynnus (Atlantic bluefin tuna).